Here is a 191-residue protein sequence, read N- to C-terminus: Polysulfide reductase chain B (191 aa).

4Fe-4S ferredoxin-type domains lie at 5 to 34 (YGMI…PDSV), 50 to 83 (GTLS…VNED), and 84 to 113 (GIVS…VDPV). [4Fe-4S] cluster contacts are provided by cysteine 14, cysteine 17, cysteine 20, cysteine 24, cysteine 61, cysteine 64, cysteine 69, cysteine 73, cysteine 93, cysteine 96, cysteine 99, cysteine 103, cysteine 120, cysteine 123, cysteine 136, and cysteine 140.

As to quaternary structure, functional polysulfide reductase is made up of three different (A, B, and C) subunits.

Component of the phosphorylative electron transport system with polysulfide as the terminal acceptor. The sequence is that of Polysulfide reductase chain B (psrB) from Wolinella succinogenes (strain ATCC 29543 / DSM 1740 / CCUG 13145 / JCM 31913 / LMG 7466 / NCTC 11488 / FDC 602W) (Vibrio succinogenes).